Reading from the N-terminus, the 171-residue chain is L-methionine sulfoximine/L-methionine sulfone acetyltransferase (171 aa).

The N-acetyltransferase domain maps to 1-163 (MTIRFADKAD…DLTFMQLQLD (163 aa)). Residues 72–74 (RSF) and 82–84 (EHS) each bind substrate. Acetyl-CoA-binding positions include 85–87 (VYV), 93–98 (GKGLGR), N124, and S133.

In terms of assembly, homodimer.

It catalyses the reaction L-methionine sulfoximine + acetyl-CoA = N-acetyl-L-methionine sulfoximine + CoA + H(+). It carries out the reaction L-methionine sulfone + acetyl-CoA = N-acetyl-L-methionine sulfone + CoA + H(+). Plays a role in the resistance against the toxic effects of L-methionine sulfoximine (MSX), a rare amino acid which inhibits glutamine synthetase (GlnA). Catalyzes the acetylation of MSX. It can also use L-methionine sulfone (MSO). Also catalyzes the acylation of free L-amino acids using an acyl-CoA as acyl donor. The sequence is that of L-methionine sulfoximine/L-methionine sulfone acetyltransferase (yncA) from Salmonella typhimurium (strain LT2 / SGSC1412 / ATCC 700720).